Reading from the N-terminus, the 421-residue chain is Phosphoribosylamine--glycine ligase (421 aa).

The ATP-grasp domain occupies Lys108–Met314. Ile134–Ser195 is an ATP binding site. Positions 284 and 286 each coordinate Mg(2+).

This sequence belongs to the GARS family. Mg(2+) serves as cofactor. It depends on Mn(2+) as a cofactor.

The catalysed reaction is 5-phospho-beta-D-ribosylamine + glycine + ATP = N(1)-(5-phospho-beta-D-ribosyl)glycinamide + ADP + phosphate + H(+). It participates in purine metabolism; IMP biosynthesis via de novo pathway; N(1)-(5-phospho-D-ribosyl)glycinamide from 5-phospho-alpha-D-ribose 1-diphosphate: step 2/2. This Streptococcus pyogenes serotype M1 protein is Phosphoribosylamine--glycine ligase.